We begin with the raw amino-acid sequence, 572 residues long: Arginine--tRNA ligase (572 aa).

Residues A127 to H137 carry the 'HIGH' region motif.

It belongs to the class-I aminoacyl-tRNA synthetase family. In terms of assembly, monomer.

The protein localises to the cytoplasm. The enzyme catalyses tRNA(Arg) + L-arginine + ATP = L-arginyl-tRNA(Arg) + AMP + diphosphate. The polypeptide is Arginine--tRNA ligase (Vesicomyosocius okutanii subsp. Calyptogena okutanii (strain HA)).